Consider the following 504-residue polypeptide: Beta-glucosidase 24 (504 aa).

The first 18 residues, Met1 to Ser18, serve as a signal peptide directing secretion. Gln47 contributes to the a beta-D-glucoside binding site. An N-linked (GlcNAc...) asparagine glycan is attached at Asn75. A beta-D-glucoside is bound by residues His151 and Asn196–Glu197. Residue Glu197 is the Proton donor of the active site. Cys216 and Cys224 form a disulfide bridge. Asn329 carries N-linked (GlcNAc...) asparagine glycosylation. A beta-D-glucoside is bound at residue Tyr340. The N-linked (GlcNAc...) asparagine glycan is linked to Asn371. Residue Glu411 participates in a beta-D-glucoside binding. Glu411 functions as the Nucleophile in the catalytic mechanism. N-linked (GlcNAc...) asparagine glycosylation occurs at Asn421. Residues Trp460, Glu467–Trp468, and Phe476 contribute to the a beta-D-glucoside site.

Belongs to the glycosyl hydrolase 1 family.

The enzyme catalyses Hydrolysis of terminal, non-reducing beta-D-glucosyl residues with release of beta-D-glucose.. The sequence is that of Beta-glucosidase 24 (BGLU24) from Oryza sativa subsp. japonica (Rice).